A 95-amino-acid polypeptide reads, in one-letter code: DNA-directed RNA polymerase subunit Rpo11 (95 aa).

Belongs to the archaeal Rpo11/eukaryotic RPB11/RPC19 RNA polymerase subunit family. As to quaternary structure, part of the RNA polymerase complex.

It is found in the cytoplasm. It catalyses the reaction RNA(n) + a ribonucleoside 5'-triphosphate = RNA(n+1) + diphosphate. Its function is as follows. DNA-dependent RNA polymerase (RNAP) catalyzes the transcription of DNA into RNA using the four ribonucleoside triphosphates as substrates. This is DNA-directed RNA polymerase subunit Rpo11 from Methanococcus vannielii (strain ATCC 35089 / DSM 1224 / JCM 13029 / OCM 148 / SB).